Consider the following 225-residue polypeptide: U2 small nuclear ribonucleoprotein B'' (225 aa).

The region spanning 7-86 (HTIYINNMND…KPMRIQYAKT (80 aa)) is the RRM 1 domain. The interval 99-145 (ADKEKKKEKKKAKTVEQTATTTNKKPGQGTPNSANTQGNSTPNPQVP) is disordered. K111 carries the N6-acetyllysine; alternate modification. A Glycyl lysine isopeptide (Lys-Gly) (interchain with G-Cter in SUMO2); alternate cross-link involves residue K111. Low complexity predominate over residues 113-123 (VEQTATTTNKK). The segment covering 127 to 141 (GTPNSANTQGNSTPN) has biased composition (polar residues). Y151 is subject to Phosphotyrosine. In terms of domain architecture, RRM 2 spans 151 to 225 (YILFLNNLPE…HAMKITYAKK (75 aa)).

This sequence belongs to the RRM U1 A/B'' family. As to quaternary structure, identified in the spliceosome B complex. Identified in the spliceosome C complex. Present in a spliceosome complex assembled in vitro, and composed of SNRPB2, HPRP8BP and CRNKL1. Contributes to the binding of stem loop IV of U2 snRNA with SNRPP1.

It is found in the nucleus. Its function is as follows. Involved in pre-mRNA splicing as component of the spliceosome. Associated with sn-RNP U2, where it contributes to the binding of stem loop IV of U2 snRNA. The sequence is that of U2 small nuclear ribonucleoprotein B'' (SNRPB2) from Homo sapiens (Human).